Consider the following 41-residue polypeptide: Ostricacin-2 (41 aa).

3 disulfides stabilise this stretch: cysteine 8/cysteine 36, cysteine 15/cysteine 30, and cysteine 20/cysteine 37.

It is found in the secreted. In terms of biological role, has antibacterial activity against the Gram-positive bacterium S.aureus 1056 MRSA (MIC=1.25 ug/ml) and the Gram-negative bacterium E.coli O157:H7 (MIC=0.96 ug/ml). Has antifungal activity against the yeast C.albicans 3153A (MIC=6.20 ug/ml). The sequence is that of Ostricacin-2 from Struthio camelus (Common ostrich).